Here is a 289-residue protein sequence, read N- to C-terminus: Acetyl-coenzyme A carboxylase carboxyl transferase subunit beta (289 aa).

The CoA carboxyltransferase N-terminal domain occupies 28-289 (VMTKCPECKK…QGGEMAVWQS (262 aa)). Zn(2+) contacts are provided by Cys32, Cys35, Cys51, and Cys54. Residues 32–54 (CPECKKIMYTKELLKNLKVCVNC) form a C4-type zinc finger.

This sequence belongs to the AccD/PCCB family. As to quaternary structure, acetyl-CoA carboxylase is a heterohexamer composed of biotin carboxyl carrier protein (AccB), biotin carboxylase (AccC) and two subunits each of ACCase subunit alpha (AccA) and ACCase subunit beta (AccD). The cofactor is Zn(2+).

Its subcellular location is the cytoplasm. It catalyses the reaction N(6)-carboxybiotinyl-L-lysyl-[protein] + acetyl-CoA = N(6)-biotinyl-L-lysyl-[protein] + malonyl-CoA. It participates in lipid metabolism; malonyl-CoA biosynthesis; malonyl-CoA from acetyl-CoA: step 1/1. Its function is as follows. Component of the acetyl coenzyme A carboxylase (ACC) complex. Biotin carboxylase (BC) catalyzes the carboxylation of biotin on its carrier protein (BCCP) and then the CO(2) group is transferred by the transcarboxylase to acetyl-CoA to form malonyl-CoA. This is Acetyl-coenzyme A carboxylase carboxyl transferase subunit beta from Bacillus cereus (strain ATCC 14579 / DSM 31 / CCUG 7414 / JCM 2152 / NBRC 15305 / NCIMB 9373 / NCTC 2599 / NRRL B-3711).